A 140-amino-acid chain; its full sequence is Large ribosomal subunit protein uL11 (140 aa).

This sequence belongs to the universal ribosomal protein uL11 family. As to quaternary structure, part of the ribosomal stalk of the 50S ribosomal subunit. Interacts with L10 and the large rRNA to form the base of the stalk. L10 forms an elongated spine to which L12 dimers bind in a sequential fashion forming a multimeric L10(L12)X complex. One or more lysine residues are methylated.

Its function is as follows. Forms part of the ribosomal stalk which helps the ribosome interact with GTP-bound translation factors. The polypeptide is Large ribosomal subunit protein uL11 (Gemmatimonas aurantiaca (strain DSM 14586 / JCM 11422 / NBRC 100505 / T-27)).